The following is a 180-amino-acid chain: Endogenous alpha-amylase/subtilisin inhibitor (180 aa).

2 cysteine pairs are disulfide-bonded: cysteine 42/cysteine 89 and cysteine 143/cysteine 147.

Belongs to the protease inhibitor I3 (leguminous Kunitz-type inhibitor) family.

Functionally, inhibitor of endogenous alpha-amylase (wheat also produces an exogenous inhibitor which inactivates alpha-amylase from animal and insect origin). This inhibitor can also inhibit subtilisin. In Triticum aestivum (Wheat), this protein is Endogenous alpha-amylase/subtilisin inhibitor.